Here is a 71-residue protein sequence, read N- to C-terminus: Sec-independent protein translocase protein TatA (71 aa).

A helical transmembrane segment spans residues 1–21; that stretch reads MGSFSMGHWLIVLAIIVLLFG. A compositionally biased stretch (basic and acidic residues) spans 41–57; it reads KEMEDETPVEKIEKADS. The interval 41-71 is disordered; the sequence is KEMEDETPVEKIEKADSETQSTKQNETTKNV. Residues 58–71 are compositionally biased toward polar residues; it reads ETQSTKQNETTKNV.

It belongs to the TatA/E family. The Tat system comprises two distinct complexes: a TatABC complex, containing multiple copies of TatA, TatB and TatC subunits, and a separate TatA complex, containing only TatA subunits. Substrates initially bind to the TatABC complex, which probably triggers association of the separate TatA complex to form the active translocon.

It localises to the cell inner membrane. Part of the twin-arginine translocation (Tat) system that transports large folded proteins containing a characteristic twin-arginine motif in their signal peptide across membranes. TatA could form the protein-conducting channel of the Tat system. This chain is Sec-independent protein translocase protein TatA, found in Campylobacter fetus subsp. fetus (strain 82-40).